Reading from the N-terminus, the 451-residue chain is Eukaryotic translation initiation factor 3 subunit E (451 aa).

The PCI domain maps to 256–425 (TDLFFSPAYI…GTVIMNHPPQ (170 aa)).

The protein belongs to the eIF-3 subunit E family. In terms of assembly, component of the eukaryotic translation initiation factor 3 (eIF-3) complex.

The protein localises to the cytoplasm. Component of the eukaryotic translation initiation factor 3 (eIF-3) complex, which is involved in protein synthesis of a specialized repertoire of mRNAs and, together with other initiation factors, stimulates binding of mRNA and methionyl-tRNAi to the 40S ribosome. The eIF-3 complex specifically targets and initiates translation of a subset of mRNAs involved in cell proliferation. This is Eukaryotic translation initiation factor 3 subunit E (int6) from Aspergillus fumigatus (strain CBS 144.89 / FGSC A1163 / CEA10) (Neosartorya fumigata).